Here is a 614-residue protein sequence, read N- to C-terminus: Bifunctional enzyme CysN/CysC (614 aa).

Positions 1–441 are sulfate adenylyltransferase; the sequence is MTTLLRLATA…SLVTAQDRPP (441 aa). In terms of domain architecture, tr-type G spans 2-217; it reads TTLLRLATAG…DVYIAGDRNM (216 aa). The segment at 11–18 is G1; that stretch reads GSVDDGKS. 11–18 is a GTP binding site; sequence GSVDDGKS. The G2 stretch occupies residues 67 to 71; the sequence is GITID. The interval 88–91 is G3; it reads DTPG. GTP is bound by residues 88-92 and 143-146; these read DTPGH and NKMD. The tract at residues 143-146 is G4; it reads NKMD. Residues 180 to 182 are G5; sequence SAL. Positions 442-614 are adenylyl-sulfate kinase; it reads RGKTVWFTGL…EVIDLLESSS (173 aa). Residue 450–457 participates in ATP binding; the sequence is GLSGSGKS. Catalysis depends on Ser524, which acts as the Phosphoserine intermediate. The interval 578–597 is disordered; that stretch reads GIDSPYQRPKNPDLRLTPDR. The segment covering 587-597 has biased composition (basic and acidic residues); sequence KNPDLRLTPDR.

It in the C-terminal section; belongs to the APS kinase family. The protein in the N-terminal section; belongs to the TRAFAC class translation factor GTPase superfamily. Classic translation factor GTPase family. CysN/NodQ subfamily. As to quaternary structure, heterodimer composed of CysD, the smaller subunit, and CysNC.

The catalysed reaction is sulfate + ATP + H(+) = adenosine 5'-phosphosulfate + diphosphate. It catalyses the reaction adenosine 5'-phosphosulfate + ATP = 3'-phosphoadenylyl sulfate + ADP + H(+). Its pathway is sulfur metabolism; hydrogen sulfide biosynthesis; sulfite from sulfate: step 1/3. It functions in the pathway sulfur metabolism; hydrogen sulfide biosynthesis; sulfite from sulfate: step 2/3. Its function is as follows. With CysD forms the ATP sulfurylase (ATPS) that catalyzes the adenylation of sulfate producing adenosine 5'-phosphosulfate (APS) and diphosphate, the first enzymatic step in sulfur assimilation pathway. APS synthesis involves the formation of a high-energy phosphoric-sulfuric acid anhydride bond driven by GTP hydrolysis by CysN coupled to ATP hydrolysis by CysD. Functionally, APS kinase catalyzes the synthesis of activated sulfate. The protein is Bifunctional enzyme CysN/CysC (cysNC) of Mycobacterium tuberculosis (strain CDC 1551 / Oshkosh).